The chain runs to 208 residues: LexA repressor (208 aa).

Positions 30 to 50 (VREICAAVGLSSTSTVHGHLS) form a DNA-binding region, H-T-H motif. Active-site for autocatalytic cleavage activity residues include S129 and K167.

This sequence belongs to the peptidase S24 family. Homodimer.

It carries out the reaction Hydrolysis of Ala-|-Gly bond in repressor LexA.. In terms of biological role, represses a number of genes involved in the response to DNA damage (SOS response), including recA and lexA. In the presence of single-stranded DNA, RecA interacts with LexA causing an autocatalytic cleavage which disrupts the DNA-binding part of LexA, leading to derepression of the SOS regulon and eventually DNA repair. This Lactobacillus acidophilus (strain ATCC 700396 / NCK56 / N2 / NCFM) protein is LexA repressor.